We begin with the raw amino-acid sequence, 537 residues long: 2-succinyl-5-enolpyruvyl-6-hydroxy-3-cyclohexene-1-carboxylate synthase (537 aa).

The protein belongs to the TPP enzyme family. MenD subfamily. Homodimer. It depends on Mg(2+) as a cofactor. Mn(2+) is required as a cofactor. The cofactor is thiamine diphosphate.

The catalysed reaction is isochorismate + 2-oxoglutarate + H(+) = 5-enolpyruvoyl-6-hydroxy-2-succinyl-cyclohex-3-ene-1-carboxylate + CO2. Its pathway is quinol/quinone metabolism; 1,4-dihydroxy-2-naphthoate biosynthesis; 1,4-dihydroxy-2-naphthoate from chorismate: step 2/7. It functions in the pathway quinol/quinone metabolism; menaquinone biosynthesis. In terms of biological role, catalyzes the thiamine diphosphate-dependent decarboxylation of 2-oxoglutarate and the subsequent addition of the resulting succinic semialdehyde-thiamine pyrophosphate anion to isochorismate to yield 2-succinyl-5-enolpyruvyl-6-hydroxy-3-cyclohexene-1-carboxylate (SEPHCHC). In Nocardioides sp. (strain ATCC BAA-499 / JS614), this protein is 2-succinyl-5-enolpyruvyl-6-hydroxy-3-cyclohexene-1-carboxylate synthase.